The primary structure comprises 288 residues: Bifunctional protein FolD (288 aa).

Residues 163–165, S188, and I229 contribute to the NADP(+) site; that span reads GRS.

It belongs to the tetrahydrofolate dehydrogenase/cyclohydrolase family. In terms of assembly, homodimer.

It carries out the reaction (6R)-5,10-methylene-5,6,7,8-tetrahydrofolate + NADP(+) = (6R)-5,10-methenyltetrahydrofolate + NADPH. It catalyses the reaction (6R)-5,10-methenyltetrahydrofolate + H2O = (6R)-10-formyltetrahydrofolate + H(+). It participates in one-carbon metabolism; tetrahydrofolate interconversion. Functionally, catalyzes the oxidation of 5,10-methylenetetrahydrofolate to 5,10-methenyltetrahydrofolate and then the hydrolysis of 5,10-methenyltetrahydrofolate to 10-formyltetrahydrofolate. The sequence is that of Bifunctional protein FolD from Campylobacter curvus (strain 525.92).